The primary structure comprises 393 residues: Homoserine O-succinyltransferase (393 aa).

The 311-residue stretch at 62-372 (NAVLVCHALN…PHGHDAFLLD (311 aa)) folds into the AB hydrolase-1 domain. Ser168 (nucleophile) is an active-site residue. Arg238 contacts substrate. Residues Asp333 and His366 contribute to the active site. Asp367 provides a ligand contact to substrate.

It belongs to the AB hydrolase superfamily. MetX family. As to quaternary structure, homodimer.

The protein localises to the cytoplasm. It catalyses the reaction L-homoserine + succinyl-CoA = O-succinyl-L-homoserine + CoA. It participates in amino-acid biosynthesis; L-methionine biosynthesis via de novo pathway; O-succinyl-L-homoserine from L-homoserine: step 1/1. In terms of biological role, transfers a succinyl group from succinyl-CoA to L-homoserine, forming succinyl-L-homoserine. The chain is Homoserine O-succinyltransferase from Cupriavidus necator (strain ATCC 17699 / DSM 428 / KCTC 22496 / NCIMB 10442 / H16 / Stanier 337) (Ralstonia eutropha).